A 337-amino-acid chain; its full sequence is Fructose-1,6-bisphosphatase class 1 (337 aa).

Mg(2+) is bound by residues Glu94, Asp116, Leu118, and Asp119. Substrate-binding positions include 119–122 (DGSS), Asn210, and Lys276. Glu282 serves as a coordination point for Mg(2+).

This sequence belongs to the FBPase class 1 family. As to quaternary structure, homotetramer. Mg(2+) serves as cofactor.

It localises to the cytoplasm. It catalyses the reaction beta-D-fructose 1,6-bisphosphate + H2O = beta-D-fructose 6-phosphate + phosphate. The protein operates within carbohydrate biosynthesis; gluconeogenesis. The sequence is that of Fructose-1,6-bisphosphatase class 1 from Burkholderia multivorans (strain ATCC 17616 / 249).